Reading from the N-terminus, the 415-residue chain is uncharacterized protein (415 aa).

4 residues coordinate [4Fe-4S] cluster: C85, C91, C94, and C175. S-adenosyl-L-methionine contacts are provided by Q248, Y276, E297, and N344. C371 functions as the Nucleophile in the catalytic mechanism.

This sequence belongs to the class I-like SAM-binding methyltransferase superfamily. RNA M5U methyltransferase family.

This is an uncharacterized protein from Leptospira interrogans serogroup Icterohaemorrhagiae serovar Lai (strain 56601).